Consider the following 410-residue polypeptide: Arginine deiminase (410 aa).

Cys400 acts as the Amidino-cysteine intermediate in catalysis.

Belongs to the arginine deiminase family.

Its subcellular location is the cytoplasm. It carries out the reaction L-arginine + H2O = L-citrulline + NH4(+). It functions in the pathway amino-acid degradation; L-arginine degradation via ADI pathway; carbamoyl phosphate from L-arginine: step 1/2. This chain is Arginine deiminase, found in Bacillus thuringiensis subsp. konkukian (strain 97-27).